The chain runs to 502 residues: Neuronal acetylcholine receptor subunit alpha-7 (502 aa).

The first 22 residues, Met1–Gln22, serve as a signal peptide directing secretion. Over Gly23–Tyr233 the chain is Extracellular. The Ca(2+) site is built by Arg42 and Val44. N-linked (GlcNAc...) asparagine glycans are attached at residues Asn46, Asn90, and Asn133. The cysteines at positions 150 and 164 are disulfide-linked. Ca(2+) contacts are provided by Ser172 and Tyr210. Cys212 and Cys213 are joined by a disulfide. Transmembrane regions (helical) follow at residues Gly234–Leu254, Ile262–Ile282, and Gln295–Leu315. The segment at Glu260 to Thr267 is essential for TMEM35A/NACHO-mediated proper subunit assembly and trafficking to cell membrane. The Cytoplasmic portion of the chain corresponds to Arg316–Arg469. The chain crosses the membrane as a helical span at residues Leu470–Ala490.

This sequence belongs to the ligand-gated ion channel (TC 1.A.9) family. Acetylcholine receptor (TC 1.A.9.1) subfamily. Alpha-7/CHRNA7 sub-subfamily. In terms of assembly, homopentamer. Can also form heteropentamers with CHRNB2, mainly found in basal forebrain cholinergic neurons. Interacts with RIC3; which is required for proper folding and assembly. Interacts with LYPD6. Interacts with CANX. In terms of processing, glycosylations at Asn-46, Asn-90 and Asn-133 are essential for TMEM35A/NACHO-mediated proper subunit assembly and trafficking to the cell membrane. In terms of tissue distribution, higly expressed in brain. ALso expressed in immune cells sucha as macrophages.

The protein localises to the postsynaptic cell membrane. The protein resides in the cell membrane. The enzyme catalyses K(+)(in) = K(+)(out). It catalyses the reaction Na(+)(in) = Na(+)(out). The catalysed reaction is Ca(2+)(in) = Ca(2+)(out). It carries out the reaction choline(out) = choline(in). The enzyme catalyses NH4(+)(in) = NH4(+)(out). It catalyses the reaction L-arginine(in) = L-arginine(out). The catalysed reaction is guanidine(out) = guanidine(in). With respect to regulation, activated by a myriad of ligands such as acetylcholine, cytisine, nicotine, choline and epibatidine. Oligomeric amyloid-beta protein 42 activates specifially CHRNA7:CHRNB2 nAchRs. Activity is modulated by positive allosteric modulators (PAMs), such as flavonoids, with a wide range of chemical diversity, pharmacological sensitivity and efficacy. AChR activity is inhibited by the antagonists alpha-conotoxons RgIA, ImI and ImII, small disulfide-constrained peptides from cone snails. Functionally, component of neuronal acetylcholine receptors (nAChRs) that function as pentameric, ligand-gated cation channels with high calcium permeability among other activities. nAChRs are excitatory neurotrasnmitter receptors formed by a collection of nAChR subunits known to mediate synaptic transmission in the nervous system and the neuromuscular junction. Each nAchR subunit confers differential attributes to channel properties, including activation, deactivation and desensitization kinetics, pH sensitivity, cation permeability, and binding to allosteric modulators. CHRNA7 forms homopentameric neuronal acetylcholine receptors abundantly expressed in the central nervous system, characterized by fast desensitization and high calcium permeability. Also forms heteropentamers with CHRNB2, mainly expressed in basal forebrain cholinergic neurons. Involved in the modulation of calcium-dependent signaling pathways and influences the release of neurotransmitters, including dopamine, glutamate and GABA. Involved in the modulation of calcium-dependent signaling pathways and influences the release of neurotransmitters, including dopamine, glutamate and GABA. Also expressed in non-neuronal cells such as immune cells like lymphocytes, monocytes and macrophages. In T cells, activation induces metabotropic signaling that results in an increase of intracellular Ca2+ concentrations, independent of ionotropic receptor functions. In macrophages, required for acetylcholine-mediated inhibition of TNF and other inflammatory cytokine release. Once activated by acetylcholine, nicotine or other agonists, selectively inhibits production of pro-inflammatory cytokines while leaving anti-inflammatory cytokines undisturbed. Stimulates the cholinergic anti-inflammatory pathway, controlling inflammation by inhibiting NFKB nuclear translocation and activating the JAK2-STAT3 pathway, independently of ion channel activity. Also expressed in the urothelium where it modulates reflex bladder activity by increasing intracellular calcium through internal stores and decreasing basal ATP release. This Mus musculus (Mouse) protein is Neuronal acetylcholine receptor subunit alpha-7 (Chrna7).